An 80-amino-acid polypeptide reads, in one-letter code: Reactive oxygen species modulator 1 (80 aa).

Residues M22–L44 traverse the membrane as a helical segment. The tract at residues S42–T60 is sufficient for antibacterial activity.

Belongs to the MGR2 family.

It is found in the mitochondrion inner membrane. Has antibacterial activity against a variety of bacteria including S.aureus, P.aeruginosa and M.tuberculosis. Acts by inducing bacterial membrane breakage. Functionally, induces production of reactive oxygen species (ROS) which are necessary for cell proliferation. May play a role in inducing oxidative DNA damage and replicative senescence. May play a role in the coordination of mitochondrial morphology and cell proliferation. The polypeptide is Reactive oxygen species modulator 1 (romo1) (Danio rerio (Zebrafish)).